The following is a 258-amino-acid chain: Indole-3-glycerol phosphate synthase (258 aa).

This sequence belongs to the TrpC family.

The enzyme catalyses 1-(2-carboxyphenylamino)-1-deoxy-D-ribulose 5-phosphate + H(+) = (1S,2R)-1-C-(indol-3-yl)glycerol 3-phosphate + CO2 + H2O. The protein operates within amino-acid biosynthesis; L-tryptophan biosynthesis; L-tryptophan from chorismate: step 4/5. This Campylobacter jejuni subsp. jejuni serotype O:23/36 (strain 81-176) protein is Indole-3-glycerol phosphate synthase.